Here is an 824-residue protein sequence, read N- to C-terminus: 4-methylaminobutanoate oxidase (formaldehyde-forming) (824 aa).

His67 bears the Pros-8alpha-FAD histidine mark.

It belongs to the GcvT family. The cofactor is FAD.

It catalyses the reaction 4-(methylamino)butanoate + O2 + H2O = 4-aminobutanoate + formaldehyde + H2O2. It functions in the pathway alkaloid degradation; nicotine degradation. Its function is as follows. Catalyzes the oxidative demethylation of 4-methylaminobutanoate produced from the pyrrolidine ring of nicotine. To a much lesser extent, can also use sarcosine as substrate, but is not active against dimethylglycine, methylaminopropionitrile, methylaminopropylamine, and alpha-methylaminobutanoate. The sequence is that of 4-methylaminobutanoate oxidase (formaldehyde-forming) (abo) from Paenarthrobacter nicotinovorans (Arthrobacter nicotinovorans).